A 45-amino-acid chain; its full sequence is DNA-directed RNA polymerase subunit Rpo12 (45 aa).

Zn(2+) is bound by residues cysteine 8, cysteine 23, and cysteine 26.

The protein belongs to the archaeal Rpo12/eukaryotic RPC10 RNA polymerase subunit family. In terms of assembly, part of the RNA polymerase complex. Requires Zn(2+) as cofactor.

It localises to the cytoplasm. The enzyme catalyses RNA(n) + a ribonucleoside 5'-triphosphate = RNA(n+1) + diphosphate. Its function is as follows. DNA-dependent RNA polymerase (RNAP) catalyzes the transcription of DNA into RNA using the four ribonucleoside triphosphates as substrates. This is DNA-directed RNA polymerase subunit Rpo12 from Methanosarcina acetivorans (strain ATCC 35395 / DSM 2834 / JCM 12185 / C2A).